The primary structure comprises 509 residues: tRNA-2-methylthio-N(6)-dimethylallyladenosine synthase (509 aa).

Residues 1–15 (MNEQQRLASQQVNSS) show a composition bias toward polar residues. Residues 1–26 (MNEQQRLASQQVNSSTKKEEKDYSKY) are disordered. Basic and acidic residues predominate over residues 16–25 (TKKEEKDYSK). One can recognise an MTTase N-terminal domain in the interval 66–184 (RKFYIRTYGC…LPYILKDAMF (119 aa)). Cys75, Cys111, Cys145, Cys221, Cys225, and Cys228 together coordinate [4Fe-4S] cluster. The 231-residue stretch at 207–437 (RRGDIKAWVN…NALVNKLAIE (231 aa)) folds into the Radical SAM core domain. The TRAM domain occupies 440-503 (DRYKGQIVEV…TWSLNGELVE (64 aa)).

This sequence belongs to the methylthiotransferase family. MiaB subfamily. Monomer. It depends on [4Fe-4S] cluster as a cofactor.

It is found in the cytoplasm. It catalyses the reaction N(6)-dimethylallyladenosine(37) in tRNA + (sulfur carrier)-SH + AH2 + 2 S-adenosyl-L-methionine = 2-methylsulfanyl-N(6)-dimethylallyladenosine(37) in tRNA + (sulfur carrier)-H + 5'-deoxyadenosine + L-methionine + A + S-adenosyl-L-homocysteine + 2 H(+). Functionally, catalyzes the methylthiolation of N6-(dimethylallyl)adenosine (i(6)A), leading to the formation of 2-methylthio-N6-(dimethylallyl)adenosine (ms(2)i(6)A) at position 37 in tRNAs that read codons beginning with uridine. The chain is tRNA-2-methylthio-N(6)-dimethylallyladenosine synthase from Bacillus cereus (strain ZK / E33L).